Reading from the N-terminus, the 428-residue chain is Serine--tRNA ligase (428 aa).

Residue 235 to 237 (TAE) coordinates L-serine. Residue 266-268 (RSE) coordinates ATP. Residue E289 participates in L-serine binding. 353-356 (EISS) provides a ligand contact to ATP. S389 is an L-serine binding site.

Belongs to the class-II aminoacyl-tRNA synthetase family. Type-1 seryl-tRNA synthetase subfamily. Homodimer. The tRNA molecule binds across the dimer.

The protein resides in the cytoplasm. The catalysed reaction is tRNA(Ser) + L-serine + ATP = L-seryl-tRNA(Ser) + AMP + diphosphate + H(+). The enzyme catalyses tRNA(Sec) + L-serine + ATP = L-seryl-tRNA(Sec) + AMP + diphosphate + H(+). It functions in the pathway aminoacyl-tRNA biosynthesis; selenocysteinyl-tRNA(Sec) biosynthesis; L-seryl-tRNA(Sec) from L-serine and tRNA(Sec): step 1/1. Functionally, catalyzes the attachment of serine to tRNA(Ser). Is also able to aminoacylate tRNA(Sec) with serine, to form the misacylated tRNA L-seryl-tRNA(Sec), which will be further converted into selenocysteinyl-tRNA(Sec). This Shewanella woodyi (strain ATCC 51908 / MS32) protein is Serine--tRNA ligase.